Reading from the N-terminus, the 136-residue chain is Mitochondrial pyruvate carrier 1-like protein (136 aa).

The Mitochondrial matrix portion of the chain corresponds to 2-19; the sequence is ARMAVLWRKMRDNFQSKE. Residues 20 to 42 traverse the membrane as a helical segment; that stretch reads FREYVSSTHFWGPAFSWGLPLAA. At 43-51 the chain is on the mother cell cytoplasmic side; that stretch reads FKDMKASPE. A helical transmembrane segment spans residues 52 to 74; sequence IISGRMTTALILYSAIFMRFAYR. Over 75-136 the chain is Mitochondrial matrix; sequence VQPRNLLLMA…PGSQPPKQAS (62 aa). The interval 111–136 is disordered; that stretch reads EAKARDPPATAAAATSPGSQPPKQAS. Over residues 117-136 the composition is skewed to low complexity; sequence PPATAAAATSPGSQPPKQAS.

The protein belongs to the mitochondrial pyruvate carrier (MPC) (TC 2.A.105) family.

It localises to the mitochondrion inner membrane. It carries out the reaction pyruvate(out) + H(+)(out) = pyruvate(in) + H(+)(in). Mediates the uptake of pyruvate into mitochondria. In Homo sapiens (Human), this protein is Mitochondrial pyruvate carrier 1-like protein (MPC1L).